A 1148-amino-acid polypeptide reads, in one-letter code: Pyruvate carboxylase (1148 aa).

One can recognise a Biotin carboxylation domain in the interval 1 to 457 (MSQQSIQKVL…DTSFIDTTPE (457 aa)). The ATP site is built by Lys121, Glu205, and His240. One can recognise an ATP-grasp domain in the interval 125-321 (REQAEKAGIP…IVQTQILVAQ (197 aa)). Residue Lys242 is part of the active site. Positions 534 to 802 (VLLTDTTFRD…RPEMNVQGVE (269 aa)) constitute a Pyruvate carboxyltransferase domain. Substrate-binding positions include 542-546 (RDAHQ) and Arg615. Asp543 is an a divalent metal cation binding site. Residues Lys712, His741, and His743 each coordinate a divalent metal cation. Position 712 is an N6-carboxylysine (Lys712). A substrate-binding site is contributed by Thr876. The Biotinyl-binding domain occupies 1071-1146 (KADRTNPSHI…QTGDLLLEIE (76 aa)). Lys1112 carries the N6-biotinyllysine modification.

Homotetramer. At very low potassium concentrations, when intracellular levels of c-di-AMP are low, interacts with apo-DarB. c-di-AMP inhibits the binding of DarB to PYC. Does not bind directly c-di-AMP. It depends on biotin as a cofactor.

It catalyses the reaction hydrogencarbonate + pyruvate + ATP = oxaloacetate + ADP + phosphate + H(+). Its activity is regulated as follows. Activated by the cyclic di-AMP (c-di-AMP) receptor DarB in the absence of c-di-AMP. Allosterically activated by acetyl-CoA. Inhibited by the biotin-complexing protein avidin. Functionally, catalyzes a 2-step reaction, involving the ATP-dependent carboxylation of the covalently attached biotin in the first step and the transfer of the carboxyl group to pyruvate in the second, leading to oxaloacetate production. Fulfills an anaplerotic function in B.subtilis as it is necessary for growth on glucose, but is not required for sporulation. The chain is Pyruvate carboxylase (pyc) from Bacillus subtilis (strain 168).